The primary structure comprises 20 residues: Zinc metalloproteinase-disintegrin-like uracoina-1 (20 aa).

It belongs to the venom metalloproteinase (M12B) family. P-III subfamily. As to quaternary structure, monomer. The cofactor is Zn(2+). In terms of tissue distribution, expressed by the venom gland.

The protein localises to the secreted. Its activity is regulated as follows. Inhibited by ethylenediaminetetraacetic acid (EDTA) and 1,10-phenanthroline. Not inhibited by tosyl-L-lysine chloromethyl ketone (TCLK) and phenylmethanesulfonylfluoride (PMSF). Functionally, snake venom zinc metalloprotease that possesses hemorrhagic activity (minimum hemorrhagic dose, MHD=4.7 ug) when injected intradermally into mice. Degrades the alpha-chain of fibrinogen (FGA). This is Zinc metalloproteinase-disintegrin-like uracoina-1 from Crotalus vegrandis (Uracoan rattlesnake).